The sequence spans 546 residues: Probable protein kinase UbiB (546 aa).

Positions 124-502 constitute a Protein kinase domain; the sequence is DFEIKPLASA…HVRQGQSRYF (379 aa). ATP contacts are provided by residues 130–138 and Lys153; that span reads LASASIAQV. Asp288 (proton acceptor) is an active-site residue. The next 2 membrane-spanning stretches (helical) occupy residues 501-521 and 522-542; these read YFLG…VSRP and EWGL…FVGW.

Belongs to the ABC1 family. UbiB subfamily.

The protein localises to the cell inner membrane. Its pathway is cofactor biosynthesis; ubiquinone biosynthesis [regulation]. Its function is as follows. Is probably a protein kinase regulator of UbiI activity which is involved in aerobic coenzyme Q (ubiquinone) biosynthesis. The protein is Probable protein kinase UbiB of Escherichia coli O127:H6 (strain E2348/69 / EPEC).